The following is a 420-amino-acid chain: Serine--tRNA ligase (420 aa).

229-231 (TAE) is an L-serine binding site. 260-262 (RAE) contributes to the ATP binding site. Glutamate 283 lines the L-serine pocket. Residue 347 to 350 (EISS) coordinates ATP. Serine 382 contacts L-serine.

It belongs to the class-II aminoacyl-tRNA synthetase family. Type-1 seryl-tRNA synthetase subfamily. As to quaternary structure, homodimer. The tRNA molecule binds across the dimer.

It localises to the cytoplasm. The catalysed reaction is tRNA(Ser) + L-serine + ATP = L-seryl-tRNA(Ser) + AMP + diphosphate + H(+). It carries out the reaction tRNA(Sec) + L-serine + ATP = L-seryl-tRNA(Sec) + AMP + diphosphate + H(+). It functions in the pathway aminoacyl-tRNA biosynthesis; selenocysteinyl-tRNA(Sec) biosynthesis; L-seryl-tRNA(Sec) from L-serine and tRNA(Sec): step 1/1. Functionally, catalyzes the attachment of serine to tRNA(Ser). Is also able to aminoacylate tRNA(Sec) with serine, to form the misacylated tRNA L-seryl-tRNA(Sec), which will be further converted into selenocysteinyl-tRNA(Sec). This Caldicellulosiruptor saccharolyticus (strain ATCC 43494 / DSM 8903 / Tp8T 6331) protein is Serine--tRNA ligase.